We begin with the raw amino-acid sequence, 2292 residues long: Protein Ycf2 (2292 aa).

Residue 1640–1647 (GSIGIGRS) participates in ATP binding.

The protein belongs to the Ycf2 family.

It is found in the plastid. It localises to the chloroplast stroma. In terms of biological role, probable ATPase of unknown function. Its presence in a non-photosynthetic plant (Epifagus virginiana) and experiments in tobacco indicate that it has an essential function which is probably not related to photosynthesis. This chain is Protein Ycf2, found in Liriodendron tulipifera (Tuliptree).